The primary structure comprises 426 residues: Gamma-glutamylputrescine oxidoreductase (426 aa).

It belongs to the gamma-glutamylputrescine oxidoreductase family.

The enzyme catalyses gamma-L-glutamylputrescine + O2 + H2O = 4-(gamma-L-glutamylamino)butanal + H2O2 + NH4(+). The protein operates within amine and polyamine degradation; putrescine degradation; 4-aminobutanoate from putrescine: step 2/4. In terms of biological role, involved in the breakdown of putrescine via the oxidation of L-glutamylputrescine. This is Gamma-glutamylputrescine oxidoreductase (puuB) from Escherichia coli (strain K12).